The following is a 489-amino-acid chain: Putative general negative regulator of transcription C16C9.04c (489 aa).

The RING-type zinc finger occupies 18-61 (CPLCMEEIDISDKNFKPCQCGYRVCRFCWHHIKEDLNGRCPACR). Residues 76–109 (AEEWKMDLHRKNERKKREKERKEVELSNRKHLAN) are a coiled coil. The RRM domain occupies 116–198 (NLAYVNGLSP…VSDGRHLRAS (83 aa)). The segment at 199–226 (YGTTKYCTSYLRNQQCPNPSCMYLHEPG) adopts a C3H1-type zinc-finger fold. Polar residues-rich tracts occupy residues 246–261 (LSTK…HSPS) and 466–479 (ENQP…NNGN). Disordered stretches follow at residues 246 to 268 (LSTK…PFKT) and 458 to 489 (VPEQ…GFQS).

Its subcellular location is the nucleus. In terms of biological role, may negatively regulate the basal and activated transcription of many genes. The polypeptide is Putative general negative regulator of transcription C16C9.04c (Schizosaccharomyces pombe (strain 972 / ATCC 24843) (Fission yeast)).